The sequence spans 575 residues: Centrosomal protein POC5 (575 aa).

The segment at 1-26 (MSSDEEKYSLPVVQNDSSRGSSVSSN) is disordered. Ser-105 and Ser-109 each carry phosphoserine. Residues 142–173 (HEILVSDFLVSDENLQKMENVLDLWSSGLKTN) form a Centrin-binding (CBR) 1 repeat. A coiled-coil region spans residues 191–222 (MEMRKEKEKHAAHLKQLCNQINELKELQKTFE). Centrin-binding (CBR) repeat units lie at residues 231–262 (VISS…HVRA) and 263–295 (RQDV…VQKQ). Positions 316–355 (SNDYEAKVAMLSGALENAKAEIQRMQHEKEHFEDSMKKAF) form a coiled coil. 2 disordered regions span residues 376–411 (AGID…MPLP) and 538–575 (KYPR…KVVD). The span at 382–400 (NNKKEEYGPGVQGKEHSAH) shows a compositional bias: basic and acidic residues. N6-acetyllysine is present on Lys-538. Polar residues predominate over residues 545–569 (PESSTSASRSLGTRSAHTQSLTSVH). The residue at position 564 (Ser-564) is a Phosphoserine.

This sequence belongs to the POC5 family. In terms of assembly, interacts with CETN2 and CETN3. Forms a microtubule-associated complex with POC1B, CETN2 and FAM161A. Interacts with CCDC15. In terms of processing, hyperphosphorylated during recruitment to procentrioles in G2/M phase.

It is found in the cytoplasm. The protein resides in the cytoskeleton. Its subcellular location is the microtubule organizing center. It localises to the centrosome. The protein localises to the centriole. Essential for the assembly of the distal half of centrioles, required for centriole elongation. Acts as a negative regulator of centriole elongation. The chain is Centrosomal protein POC5 (POC5) from Homo sapiens (Human).